The primary structure comprises 325 residues: Phospholipid phosphatase-related protein type 1 (325 aa).

3 helical membrane-spanning segments follow: residues 11-31 (YSII…TVLL), 67-87 (FISP…IIFI), and 127-147 (FIGV…AGQV). The N-linked (GlcNAc...) asparagine glycan is linked to asparagine 163. 3 helical membrane passes run 201–218 (AALS…ITST), 230–247 (VLCL…LNRV), and 257–277 (VIGG…CVVH). Asparagine 316 carries an N-linked (GlcNAc...) asparagine glycan.

The protein belongs to the PA-phosphatase related phosphoesterase family.

Its subcellular location is the cell membrane. It localises to the cell projection. The protein resides in the neuron projection. In terms of biological role, may play a role in neurite outgrowth and neurogenesis. This Xenopus tropicalis (Western clawed frog) protein is Phospholipid phosphatase-related protein type 1.